Reading from the N-terminus, the 79-residue chain is Acyl carrier protein (79 aa).

Positions 2 to 77 constitute a Carrier domain; that stretch reads SDIEARVRKI…SAIDYANTHQ (76 aa). O-(pantetheine 4'-phosphoryl)serine is present on S37.

The protein belongs to the acyl carrier protein (ACP) family. Post-translationally, 4'-phosphopantetheine is transferred from CoA to a specific serine of apo-ACP by AcpS. This modification is essential for activity because fatty acids are bound in thioester linkage to the sulfhydryl of the prosthetic group.

Its subcellular location is the cytoplasm. Its pathway is lipid metabolism; fatty acid biosynthesis. Its function is as follows. Carrier of the growing fatty acid chain in fatty acid biosynthesis. The polypeptide is Acyl carrier protein (Verminephrobacter eiseniae (strain EF01-2)).